The chain runs to 95 residues: Aspartyl/glutamyl-tRNA(Asn/Gln) amidotransferase subunit C (95 aa).

The protein belongs to the GatC family. In terms of assembly, heterotrimer of A, B and C subunits.

It catalyses the reaction L-glutamyl-tRNA(Gln) + L-glutamine + ATP + H2O = L-glutaminyl-tRNA(Gln) + L-glutamate + ADP + phosphate + H(+). The catalysed reaction is L-aspartyl-tRNA(Asn) + L-glutamine + ATP + H2O = L-asparaginyl-tRNA(Asn) + L-glutamate + ADP + phosphate + 2 H(+). In terms of biological role, allows the formation of correctly charged Asn-tRNA(Asn) or Gln-tRNA(Gln) through the transamidation of misacylated Asp-tRNA(Asn) or Glu-tRNA(Gln) in organisms which lack either or both of asparaginyl-tRNA or glutaminyl-tRNA synthetases. The reaction takes place in the presence of glutamine and ATP through an activated phospho-Asp-tRNA(Asn) or phospho-Glu-tRNA(Gln). The polypeptide is Aspartyl/glutamyl-tRNA(Asn/Gln) amidotransferase subunit C (Chlorobium limicola (strain DSM 245 / NBRC 103803 / 6330)).